A 37-amino-acid chain; its full sequence is Large ribosomal subunit protein bL36 (37 aa).

It belongs to the bacterial ribosomal protein bL36 family.

The protein is Large ribosomal subunit protein bL36 of Shewanella woodyi (strain ATCC 51908 / MS32).